The primary structure comprises 452 residues: Phosphatidylinositol N-acetylglucosaminyltransferase GPI3 subunit (452 aa).

The chain crosses the membrane as a helical span at residues 407-427 (LYLLCGIVEYMLFFLLEWLYP).

The protein belongs to the glycosyltransferase group 1 family. Component of the phosphatidylinositol N-acetylglucosaminyltransferase complex composed of at least GPI1, GPI2, GPI3, GPI15, GPI19 and ERI1.

It is found in the endoplasmic reticulum membrane. It carries out the reaction a 1,2-diacyl-sn-glycero-3-phospho-(1D-myo-inositol) + UDP-N-acetyl-alpha-D-glucosamine = a 6-(N-acetyl-alpha-D-glucosaminyl)-1-(1,2-diacyl-sn-glycero-3-phospho)-1D-myo-inositol + UDP + H(+). Its pathway is glycolipid biosynthesis; glycosylphosphatidylinositol-anchor biosynthesis. Its activity is regulated as follows. Inhibited by Ras, probably via the interaction between RAS2 and ERI1. Functionally, catalytic subunit in the complex catalyzing the transfer of N-acetylglucosamine from UDP-N-acetylglucosamine to phosphatidylinositol, the first step of GPI biosynthesis. This is Phosphatidylinositol N-acetylglucosaminyltransferase GPI3 subunit (SPT14) from Saccharomyces cerevisiae (strain RM11-1a) (Baker's yeast).